We begin with the raw amino-acid sequence, 230 residues long: Ribonuclease 3 (230 aa).

The 121-residue stretch at 5-125 (YSRFYNILGY…VIGAIYLDSD (121 aa)) folds into the RNase III domain. E40 is a binding site for Mg(2+). D44 is a catalytic residue. D111 and E114 together coordinate Mg(2+). E114 is a catalytic residue. The 71-residue stretch at 153-223 (DSKSKLQEIL…AEKMIEMLSQ (71 aa)) folds into the DRBM domain.

This sequence belongs to the ribonuclease III family. As to quaternary structure, homodimer. Mg(2+) serves as cofactor.

Its subcellular location is the cytoplasm. It carries out the reaction Endonucleolytic cleavage to 5'-phosphomonoester.. Digests double-stranded RNA. Involved in the processing of primary rRNA transcript to yield the immediate precursors to the large and small rRNAs (23S and 16S). Processes some mRNAs, and tRNAs when they are encoded in the rRNA operon. Processes pre-crRNA and tracrRNA of type II CRISPR loci if present in the organism. The chain is Ribonuclease 3 from Francisella tularensis subsp. holarctica (strain LVS).